We begin with the raw amino-acid sequence, 135 residues long: MPSVSVWVRSLAPMTTWTRAAIGALGEDLAVKHLDSLGMRVLERNWRCRYGELDVIAEDPAARAVVFVEVKTRTTDHFGGVVQAVTPQKVRRLRRLAGLWLAGRDERWAAVRIDVIGVRIGRQATPEITHLTGVA.

The protein belongs to the UPF0102 family.

The polypeptide is UPF0102 protein Mjls_1965 (Mycobacterium sp. (strain JLS)).